Here is a 345-residue protein sequence, read N- to C-terminus: 1-aminocyclopropane-1-carboxylate oxidase homolog 7 (345 aa).

A Glycyl lysine isopeptide (Lys-Gly) (interchain with G-Cter in ubiquitin) cross-link involves residue Lys16. The Fe2OG dioxygenase domain maps to 194–293 (KGLHMICHYY…RISIACFFSS (100 aa)). Residues His218, Asp220, and His274 each contribute to the Fe cation site. Residue Arg284 coordinates 2-oxoglutarate.

Belongs to the iron/ascorbate-dependent oxidoreductase family. Fe(2+) is required as a cofactor.

The protein is 1-aminocyclopropane-1-carboxylate oxidase homolog 7 of Arabidopsis thaliana (Mouse-ear cress).